The following is an 827-amino-acid chain: Ribosome biogenesis protein ERB1 (827 aa).

Residues 1 to 129 form a disordered region; sequence MVHSKKDKSV…DFSDDNDTRP (129 aa). Over residues 7–18 the composition is skewed to basic and acidic residues; it reads DKSVMKHSDIKK. A compositionally biased stretch (acidic residues) spans 45 to 60; the sequence is CDSDDDEEFQSAEEEV. Low complexity predominate over residues 61-77; the sequence is LSSGSESSSKEGSTPGS. 2 stretches are compositionally biased toward acidic residues: residues 81–99 and 108–124; these read GSDE…DEDA and EEGD…FSDD. The interval 291–409 is required for interaction with NOP7; sequence RFVPSKHEAK…LRKVPGYGES (119 aa). The interval 409–445 is required for interaction with YTM1; the sequence is SVRERFERSLDLYLAPRVRKNKLNIDPESLIPELPSP. 6 WD repeats span residues 461–500, 509–549, 657–695, 698–737, 741–780, and 796–827; these read GHKG…EVYK, NQDD…FEVE, KSKG…LVKK, PGAR…TPYK, YHEK…DMMK, and VNSL…LWTT.

Belongs to the WD repeat BOP1/ERB1 family. In terms of assembly, component of the NOP7 complex, composed of ERB1, NOP7 and YTM1. The complex is held together by ERB1, which interacts with NOP7 via its N-terminal domain and with YTM1 via a high-affinity interaction between the seven-bladed beta-propeller domains of the 2 proteins. The NOP7 complex associates with the 66S pre-ribosome.

The protein localises to the nucleus. Its subcellular location is the nucleolus. The protein resides in the nucleoplasm. Its function is as follows. Component of the NOP7 complex, which is required for maturation of the 25S and 5.8S ribosomal RNAs and formation of the 60S ribosome. This chain is Ribosome biogenesis protein ERB1, found in Eremothecium gossypii (strain ATCC 10895 / CBS 109.51 / FGSC 9923 / NRRL Y-1056) (Yeast).